A 157-amino-acid chain; its full sequence is Alpha-amylase/trypsin inhibitor RA16 (157 aa).

The signal sequence occupies residues 1–26; it reads MASNKVVISALLVVVVSVLAATTTMA. Intrachain disulfides connect C41–C89, C55–C77, C63–C121, C78–C137, and C91–C149.

This sequence belongs to the cereal trypsin/alpha-amylase inhibitor family. Five disulfide bonds are present.

The protein resides in the secreted. Functionally, seed storage protein. The protein is Alpha-amylase/trypsin inhibitor RA16 of Oryza sativa subsp. japonica (Rice).